Here is a 222-residue protein sequence, read N- to C-terminus: ATP-dependent dethiobiotin synthetase BioD (222 aa).

ATP is bound at residue 12-17 (DAGKTV). Thr16 is a Mg(2+) binding site. The active site involves Lys37. A substrate-binding site is contributed by Ser41. ATP is bound by residues Asp54, 116–119 (EGAG), 176–177 (VQ), 206–208 (PYL), and Glu213. Residues Asp54 and Glu116 each contribute to the Mg(2+) site.

This sequence belongs to the dethiobiotin synthetase family. As to quaternary structure, homodimer. Mg(2+) serves as cofactor.

The protein resides in the cytoplasm. The enzyme catalyses (7R,8S)-7,8-diammoniononanoate + CO2 + ATP = (4R,5S)-dethiobiotin + ADP + phosphate + 3 H(+). The protein operates within cofactor biosynthesis; biotin biosynthesis; biotin from 7,8-diaminononanoate: step 1/2. Catalyzes a mechanistically unusual reaction, the ATP-dependent insertion of CO2 between the N7 and N8 nitrogen atoms of 7,8-diaminopelargonic acid (DAPA, also called 7,8-diammoniononanoate) to form a ureido ring. The chain is ATP-dependent dethiobiotin synthetase BioD from Idiomarina loihiensis (strain ATCC BAA-735 / DSM 15497 / L2-TR).